Reading from the N-terminus, the 376-residue chain is UDP-4-amino-4,6-dideoxy-N-acetyl-beta-L-altrosamine transaminase (376 aa).

Substrate contacts are provided by residues Tyr-4, 24 to 27, Ala-54, and Ser-176; that span reads EILT. Lys-181 is subject to N6-(pyridoxal phosphate)lysine. Substrate-binding positions include Asn-226 and 311-314; that span reads QVHY.

It belongs to the DegT/DnrJ/EryC1 family.

It catalyses the reaction UDP-4-amino-4,6-dideoxy-N-acetyl-beta-L-altrosamine + 2-oxoglutarate = UDP-2-acetamido-2,6-dideoxy-beta-L-arabino-hex-4-ulose + L-glutamate. Catalyzes the second step in the biosynthesis of pseudaminic acid, a sialic-acid-like sugar that is used to modify flagellin. Uses UDP-2-acetamido-2,6-dideoxy-beta-L-arabino-4-hexulose as substrate producing UDP-4-amino-4,6-dideoxy-beta-L-AltNAc. The protein is UDP-4-amino-4,6-dideoxy-N-acetyl-beta-L-altrosamine transaminase (pseC) of Campylobacter jejuni subsp. jejuni serotype O:2 (strain ATCC 700819 / NCTC 11168).